The primary structure comprises 92 residues: YcgL domain-containing protein SO_2575 (92 aa).

Residues 1–85 (MLCAVYKSSR…PQVNLLAEHR (85 aa)) form the YcgL domain.

The protein is YcgL domain-containing protein SO_2575 of Shewanella oneidensis (strain ATCC 700550 / JCM 31522 / CIP 106686 / LMG 19005 / NCIMB 14063 / MR-1).